Consider the following 526-residue polypeptide: Glucose-6-phosphate isomerase (526 aa).

The active-site Proton donor is Glu-347. Catalysis depends on residues His-378 and Lys-493.

Belongs to the GPI family.

It is found in the cytoplasm. The catalysed reaction is alpha-D-glucose 6-phosphate = beta-D-fructose 6-phosphate. It participates in carbohydrate biosynthesis; gluconeogenesis. It functions in the pathway carbohydrate degradation; glycolysis; D-glyceraldehyde 3-phosphate and glycerone phosphate from D-glucose: step 2/4. Its function is as follows. Catalyzes the reversible isomerization of glucose-6-phosphate to fructose-6-phosphate. The chain is Glucose-6-phosphate isomerase from Chlamydia pneumoniae (Chlamydophila pneumoniae).